We begin with the raw amino-acid sequence, 478 residues long: Early growth response protein 4 (478 aa).

Residues 15–37 (SKPTEGCAHTSPELPRLPARDAP) are disordered. 3 C2H2-type zinc fingers span residues 372–396 (FACPVESCVRTFARSDELNRHLRIH), 402–424 (FQCRICLRNFSRSDHLTTHVRTH), and 430–452 (FACDVCGRRFARSDEKKRHSKVH).

The protein belongs to the EGR C2H2-type zinc-finger protein family.

Its subcellular location is the nucleus. Its function is as follows. Transcriptional regulator. Recognizes and binds to the DNA sequence 5'-GCGGGGGCG-3' (GSG). Activates the transcription of target genes whose products are required for mitogenesis and differentiation. In Rattus norvegicus (Rat), this protein is Early growth response protein 4 (Egr4).